Here is a 121-residue protein sequence, read N- to C-terminus: Small ribosomal subunit protein uS13 (121 aa).

The segment at 91 to 121 (HRKGLPVRGQRTRTNARTRKGKKKTVAGKKK) is disordered.

Belongs to the universal ribosomal protein uS13 family. As to quaternary structure, part of the 30S ribosomal subunit. Forms a loose heterodimer with protein S19. Forms two bridges to the 50S subunit in the 70S ribosome.

Functionally, located at the top of the head of the 30S subunit, it contacts several helices of the 16S rRNA. In the 70S ribosome it contacts the 23S rRNA (bridge B1a) and protein L5 of the 50S subunit (bridge B1b), connecting the 2 subunits; these bridges are implicated in subunit movement. Contacts the tRNAs in the A and P-sites. This Treponema denticola (strain ATCC 35405 / DSM 14222 / CIP 103919 / JCM 8153 / KCTC 15104) protein is Small ribosomal subunit protein uS13.